A 179-amino-acid polypeptide reads, in one-letter code: Photosystem I assembly protein Ycf4 (179 aa).

The next 2 helical transmembrane spans lie at 21–41 (LISF…YLGV) and 59–79 (IVMT…LLNI).

It belongs to the Ycf4 family.

The protein localises to the plastid. The protein resides in the chloroplast thylakoid membrane. Its function is as follows. Seems to be required for the assembly of the photosystem I complex. The sequence is that of Photosystem I assembly protein Ycf4 from Rhodomonas salina (Cryptomonas salina).